The sequence spans 353 residues: Ornithine racemase (353 aa).

Catalysis depends on Lys35, which acts as the Proton acceptor. The residue at position 35 (Lys35) is an N6-(pyridoxal phosphate)lysine. Arg128 contributes to the substrate binding site.

The protein belongs to the alanine racemase family. Homodimer. It depends on pyridoxal 5'-phosphate as a cofactor.

The catalysed reaction is L-ornithine = D-ornithine. Functionally, involved in the ornithine fermentation pathway. Catalyzes the conversion of L-ornithine to D-ornithine. OR could also racemize basic amino acids such as lysine and arginine. Serine, asparagine and alanine could be also converted by OR, but at a lower rate. This is Ornithine racemase from Acetoanaerobium sticklandii (strain ATCC 12662 / DSM 519 / JCM 1433 / CCUG 9281 / NCIMB 10654 / HF) (Clostridium sticklandii).